A 476-amino-acid chain; its full sequence is WD repeat, SAM and U-box domain-containing protein 1 (476 aa).

7 WD repeats span residues 10-47 (DHGDDVNCCAFSFSLLATCSLDKTIRLYSLRDFTELPH), 52-91 (FHTYAVHCCCFSPSGHILASCSTDGTTVLWNTENGQMLAV), 95-134 (PSGSPVRVCQFSPDSTCLASGAADGTVVLWNAQSYKLYRC), 137-176 (VKDGSLAACAFSPNGSFFVTGSSCGDLTVWDDKMRCLHSE), 178-228 (AHDL…LGFE), 237-276 (GHCAPVLACAFSHDGQMLVSGSVDKSVIVYDTNTENILHT), and 279-318 (QHTRYVTTCAFAPNTLLLATGSMDKTVNIWQFDLETLCQA). The SAM domain occupies 332-396 (WSEEDVSTWL…LRKIEELRTK (65 aa)). A U-box domain is found at 403–476 (GIPDEFICPI…INRWLETHQK (74 aa)). T458 carries the phosphothreonine modification.

The sequence is that of WD repeat, SAM and U-box domain-containing protein 1 (WDSUB1) from Homo sapiens (Human).